A 365-amino-acid polypeptide reads, in one-letter code: Mitogen-activated protein kinase p38b (365 aa).

The Protein kinase domain maps to 24–311 (YQNLQPVGQG…AEQALAHPYM (288 aa)). ATP contacts are provided by residues 30-38 (VGQGAYGQV) and lysine 53. Aspartate 153 serves as the catalytic Proton acceptor. Threonine 183 is subject to Phosphothreonine. A TXY motif is present at residues 183-185 (TGY). Phosphotyrosine is present on tyrosine 185.

Belongs to the protein kinase superfamily. CMGC Ser/Thr protein kinase family. MAP kinase subfamily. Requires Mg(2+) as cofactor. Post-translationally, dually phosphorylated on Thr-183 and Tyr-185, which activates the enzyme. As to expression, at mid-embryogenesis, highest expression is seen in developing anterior and posterior midguts. Almost ubiquitous expression throughout all development.

It localises to the nucleus. It carries out the reaction L-seryl-[protein] + ATP = O-phospho-L-seryl-[protein] + ADP + H(+). It catalyses the reaction L-threonyl-[protein] + ATP = O-phospho-L-threonyl-[protein] + ADP + H(+). Activated by threonine and tyrosine phosphorylation by Mkk3. In terms of biological role, kinase involved in dpp signal transduction pathway in the process of wing morphogenesis when the levels of dpp are enhanced or inhibited. May down-regulate insect immunity gene expression after prolonged infection. The protein is Mitogen-activated protein kinase p38b of Drosophila melanogaster (Fruit fly).